The chain runs to 36 residues: Light-harvesting protein B-1015 gamma chain (36 aa).

In terms of biological role, one of the components of the bacteriochlorophyll-protein complex in the chromatophore membrane. This chain is Light-harvesting protein B-1015 gamma chain, found in Blastochloris viridis (Rhodopseudomonas viridis).